The following is a 367-amino-acid chain: Phosphoribosylaminoimidazole-succinocarboxamide synthase (367 aa).

It belongs to the SAICAR synthetase family.

It carries out the reaction 5-amino-1-(5-phospho-D-ribosyl)imidazole-4-carboxylate + L-aspartate + ATP = (2S)-2-[5-amino-1-(5-phospho-beta-D-ribosyl)imidazole-4-carboxamido]succinate + ADP + phosphate + 2 H(+). It functions in the pathway purine metabolism; IMP biosynthesis via de novo pathway; 5-amino-1-(5-phospho-D-ribosyl)imidazole-4-carboxamide from 5-amino-1-(5-phospho-D-ribosyl)imidazole-4-carboxylate: step 1/2. The chain is Phosphoribosylaminoimidazole-succinocarboxamide synthase from Shewanella oneidensis (strain ATCC 700550 / JCM 31522 / CIP 106686 / LMG 19005 / NCIMB 14063 / MR-1).